Consider the following 152-residue polypeptide: Protein-export protein SecB (152 aa).

Belongs to the SecB family. Homotetramer, a dimer of dimers. One homotetramer interacts with 1 SecA dimer.

It localises to the cytoplasm. Functionally, one of the proteins required for the normal export of preproteins out of the cell cytoplasm. It is a molecular chaperone that binds to a subset of precursor proteins, maintaining them in a translocation-competent state. It also specifically binds to its receptor SecA. The polypeptide is Protein-export protein SecB (Rickettsia peacockii (strain Rustic)).